The primary structure comprises 878 residues: NUT family member 2A (878 aa).

Disordered regions lie at residues 273-324, 417-566, 627-757, and 775-878; these read WSQG…DDSC, QKSQ…LSYT, KEKQ…EEEE, and WLPQ…RCSQ. Pro residues-rich tracts occupy residues 278–288 and 427–444; these read PLPPPPPPAAQ and CLPP…PPAP. The segment covering 476-487 has biased composition (basic residues); the sequence is TKARRPPPRPHR. Basic and acidic residues predominate over residues 537-551; that stretch reads EPEKQREEGEVKQPQ.

This sequence belongs to the NUT family.

The polypeptide is NUT family member 2A (NUTM2A) (Homo sapiens (Human)).